The sequence spans 128 residues: NADPH-dependent 7-cyano-7-deazaguanine reductase (128 aa).

C34 serves as the catalytic Thioimide intermediate. D41 acts as the Proton donor in catalysis. Residues 56–58 (VEL) and 75–76 (HE) contribute to the substrate site.

The protein belongs to the GTP cyclohydrolase I family. QueF type 1 subfamily.

Its subcellular location is the cytoplasm. It carries out the reaction 7-aminomethyl-7-carbaguanine + 2 NADP(+) = 7-cyano-7-deazaguanine + 2 NADPH + 3 H(+). It participates in tRNA modification; tRNA-queuosine biosynthesis. In terms of biological role, catalyzes the NADPH-dependent reduction of 7-cyano-7-deazaguanine (preQ0) to 7-aminomethyl-7-deazaguanine (preQ1). In Thermomicrobium roseum (strain ATCC 27502 / DSM 5159 / P-2), this protein is NADPH-dependent 7-cyano-7-deazaguanine reductase.